The primary structure comprises 113 residues: Retrotransposon Gag-like protein 8C (113 aa).

It belongs to the FAM127 family.

The polypeptide is Retrotransposon Gag-like protein 8C (Homo sapiens (Human)).